Reading from the N-terminus, the 235-residue chain is Enolase-phosphatase E1 (235 aa).

The protein belongs to the HAD-like hydrolase superfamily. MasA/MtnC family. In terms of assembly, monomer. It depends on Mg(2+) as a cofactor.

It carries out the reaction 5-methylsulfanyl-2,3-dioxopentyl phosphate + H2O = 1,2-dihydroxy-5-(methylsulfanyl)pent-1-en-3-one + phosphate. The protein operates within amino-acid biosynthesis; L-methionine biosynthesis via salvage pathway; L-methionine from S-methyl-5-thio-alpha-D-ribose 1-phosphate: step 3/6. It participates in amino-acid biosynthesis; L-methionine biosynthesis via salvage pathway; L-methionine from S-methyl-5-thio-alpha-D-ribose 1-phosphate: step 4/6. Bifunctional enzyme that catalyzes the enolization of 2,3-diketo-5-methylthiopentyl-1-phosphate (DK-MTP-1-P) into the intermediate 2-hydroxy-3-keto-5-methylthiopentenyl-1-phosphate (HK-MTPenyl-1-P), which is then dephosphorylated to form the acireductone 1,2-dihydroxy-3-keto-5-methylthiopentene (DHK-MTPene). The sequence is that of Enolase-phosphatase E1 from Gluconacetobacter diazotrophicus (strain ATCC 49037 / DSM 5601 / CCUG 37298 / CIP 103539 / LMG 7603 / PAl5).